The sequence spans 109 residues: Nucleoid-associated protein Shal_1591 (109 aa).

The segment at 87 to 109 is disordered; the sequence is NQKEKMAEVTGGMQLPPGMKMPF.

Belongs to the YbaB/EbfC family. In terms of assembly, homodimer.

The protein resides in the cytoplasm. It localises to the nucleoid. In terms of biological role, binds to DNA and alters its conformation. May be involved in regulation of gene expression, nucleoid organization and DNA protection. The chain is Nucleoid-associated protein Shal_1591 from Shewanella halifaxensis (strain HAW-EB4).